A 503-amino-acid polypeptide reads, in one-letter code: ATP synthase subunit alpha (503 aa).

169–176 (GDRKTGKT) is a binding site for ATP.

It belongs to the ATPase alpha/beta chains family. In terms of assembly, F-type ATPases have 2 components, CF(1) - the catalytic core - and CF(0) - the membrane proton channel. CF(1) has five subunits: alpha(3), beta(3), gamma(1), delta(1), epsilon(1). CF(0) has three main subunits: a(1), b(2) and c(9-12). The alpha and beta chains form an alternating ring which encloses part of the gamma chain. CF(1) is attached to CF(0) by a central stalk formed by the gamma and epsilon chains, while a peripheral stalk is formed by the delta and b chains.

The protein resides in the cell membrane. It carries out the reaction ATP + H2O + 4 H(+)(in) = ADP + phosphate + 5 H(+)(out). Functionally, produces ATP from ADP in the presence of a proton gradient across the membrane. The alpha chain is a regulatory subunit. The protein is ATP synthase subunit alpha of Ligilactobacillus salivarius (strain UCC118) (Lactobacillus salivarius).